Reading from the N-terminus, the 355-residue chain is Uroporphyrinogen decarboxylase (355 aa).

Substrate-binding positions include 27-31, D77, Y154, T209, and H327; that span reads RQAGR.

This sequence belongs to the uroporphyrinogen decarboxylase family. As to quaternary structure, homodimer.

It is found in the cytoplasm. It carries out the reaction uroporphyrinogen III + 4 H(+) = coproporphyrinogen III + 4 CO2. Its pathway is porphyrin-containing compound metabolism; protoporphyrin-IX biosynthesis; coproporphyrinogen-III from 5-aminolevulinate: step 4/4. Catalyzes the decarboxylation of four acetate groups of uroporphyrinogen-III to yield coproporphyrinogen-III. This is Uroporphyrinogen decarboxylase from Aeromonas salmonicida (strain A449).